The primary structure comprises 519 residues: MIOREX complex component 12 (519 aa).

Residues 1-35 (MLRSLHSAATLSNKRFYSLISHSNRKNIIKKLLRH) constitute a mitochondrion transit peptide.

Associates with the mitochondrial ribosome.

The protein localises to the mitochondrion. Its function is as follows. Component of MIOREX complexes, large expressome-like assemblies of ribosomes with factors involved in all the steps of post-transcriptional gene expression. In Saccharomyces cerevisiae (strain ATCC 204508 / S288c) (Baker's yeast), this protein is MIOREX complex component 12.